Consider the following 141-residue polypeptide: MRLMGLDIGDRRIGVALTDENGVAAYPLEVLERTSPEKDLRRITEIIDQYGVERVVAGLPKTLSGQIGPQGDKVLSFLDKLRVRSTVPVITWDERLTTAEVEKLLVSADLGRRRRRKVVDKLAATLILNSYLNSRKSGRNT.

This sequence belongs to the YqgF nuclease family.

The protein localises to the cytoplasm. In terms of biological role, could be a nuclease involved in processing of the 5'-end of pre-16S rRNA. The chain is Putative pre-16S rRNA nuclease from Desulforudis audaxviator (strain MP104C).